A 341-amino-acid polypeptide reads, in one-letter code: Methionine import ATP-binding protein MetN 3 (341 aa).

In terms of domain architecture, ABC transporter spans isoleucine 2–valine 241. Glycine 38–serine 45 lines the ATP pocket.

This sequence belongs to the ABC transporter superfamily. Methionine importer (TC 3.A.1.24) family. The complex is composed of two ATP-binding proteins (MetN), two transmembrane proteins (MetI) and a solute-binding protein (MetQ).

The protein localises to the cell membrane. It catalyses the reaction L-methionine(out) + ATP + H2O = L-methionine(in) + ADP + phosphate + H(+). It carries out the reaction D-methionine(out) + ATP + H2O = D-methionine(in) + ADP + phosphate + H(+). Functionally, part of the ABC transporter complex MetNIQ involved in methionine import. Responsible for energy coupling to the transport system. This is Methionine import ATP-binding protein MetN 3 from Bacillus cereus (strain ZK / E33L).